We begin with the raw amino-acid sequence, 85 residues long: Elongation factor 1-beta (85 aa).

Belongs to the EF-1-beta/EF-1-delta family.

Its function is as follows. Promotes the exchange of GDP for GTP in EF-1-alpha/GDP, thus allowing the regeneration of EF-1-alpha/GTP that could then be used to form the ternary complex EF-1-alpha/GTP/AAtRNA. This chain is Elongation factor 1-beta, found in Methanospirillum hungatei JF-1 (strain ATCC 27890 / DSM 864 / NBRC 100397 / JF-1).